We begin with the raw amino-acid sequence, 259 residues long: Insulin-induced gene 1 protein (259 aa).

At 1–66 (MPRLHDHVWS…ARPGSWHHDL (66 aa)) the chain is on the cytoplasmic side. The segment at 33 to 57 (PQGPGAPEPEPAPRGQREGTAGFSA) is disordered. A helical transmembrane segment spans residues 67–89 (VQRSLVLFSFGVVLALVLNLLQI). Over 90 to 108 (QRNVTLFPDEVIATIFSSA) the chain is Extracellular. Residues 109–126 (WWVPPCCGTAAAVVGLLY) traverse the membrane as a helical segment. Topologically, residues 127–141 (PCIDSHLGEPHKFKR) are cytoplasmic. Glycyl lysine isopeptide (Lys-Gly) (interchain with G-Cter in ubiquitin) cross-links involve residues Lys138 and Lys140. Residues 142–164 (EWASVMRCIAVFVGINHASAKLD) form a helical membrane-spanning segment. Residues 165 to 167 (FAN) lie on the Extracellular side of the membrane. A helical transmembrane segment spans residues 168–186 (NVQLSLTLAALSLGLWWTF). Over 187 to 191 (DRSRS) the chain is Cytoplasmic. Position 189 is a phosphoserine (Ser189). Residues 192–213 (GLGLGITIAFLATLITQFLVYN) form a helical membrane-spanning segment. Residues 214-227 (GVYQYTSPDFLYIR) lie on the Extracellular side of the membrane. Residues 228–245 (SWLPCIFFSGGVTVGNIG) form a helical membrane-spanning segment. The Cytoplasmic segment spans residues 246 to 259 (RQLAMGVPEKPHSD). The KxHxx motif lies at 253–259 (PEKPHSD).

It belongs to the INSIG family. Interacts with SCAP; interaction is direct and only takes place in the presence of sterols; it prevents interaction between SCAP and the coat protein complex II (COPII). Associates with the SCAP-SREBP complex (composed of SCAP and SREBF1/SREBP1 or SREBF2/SREBP2); association is mediated via its interaction with SCAP and only takes place in the presence of sterols. Interaction with SCAP is mutually exclusive with PAQR3. Interacts with HMGCR (via its SSD); the interaction, accelerated by sterols, leads to the recruitment of HMGCR to AMFR/gp78 for its ubiquitination by the sterol-mediated ERAD pathway. Interacts with AMFR/gp78 (via its membrane domain); the interaction recruits HMCR at the ER membrane for its ubiquitination and degradation by the sterol-mediated ERAD pathway. Interacts with SOAT2/ACAT2; leading to promote recruitment of AMFR/gp78 and subsequent ubiquitination of SOAT2/ACAT2. Interacts with RNF139. Interacts with RNF145. Post-translationally, phosphorylation at Ser-189 by PCK1 reduces binding to oxysterol, disrupting the interaction between INSIG1 and SCAP, thereby promoting nuclear translocation of SREBP proteins (SREBF1/SREBP1 or SREBF2/SREBP2) and subsequent transcription of downstream lipogenesis-related genes. In terms of processing, ubiquitinated by AMFR/gp78 in response to sterol deprivation, leading to its degradation: when the SCAP-SREBP complex becomes dissociated from INSIG1, INSIG1 is then ubiquitinated and degraded in proteasomes. Although ubiquitination is required for rapid INSIG1 degradation, it is not required for release of the SCAP-SREBP complex. Ubiquitinated by RNF139. Highly expressed in liver and kidney.

The protein resides in the endoplasmic reticulum membrane. In terms of biological role, oxysterol-binding protein that mediates feedback control of cholesterol synthesis by controlling both endoplasmic reticulum to Golgi transport of SCAP and degradation of HMGCR. Acts as a negative regulator of cholesterol biosynthesis by mediating the retention of the SCAP-SREBP complex in the endoplasmic reticulum, thereby blocking the processing of sterol regulatory element-binding proteins (SREBPs) SREBF1/SREBP1 and SREBF2/SREBP2. Binds oxysterol, including 25-hydroxycholesterol, regulating interaction with SCAP and retention of the SCAP-SREBP complex in the endoplasmic reticulum. In presence of oxysterol, interacts with SCAP, retaining the SCAP-SREBP complex in the endoplasmic reticulum, thereby preventing SCAP from escorting SREBF1/SREBP1 and SREBF2/SREBP2 to the Golgi. Sterol deprivation or phosphorylation by PCK1 reduce oxysterol-binding, disrupting the interaction between INSIG1 and SCAP, thereby promoting Golgi transport of the SCAP-SREBP complex, followed by processing and nuclear translocation of SREBF1/SREBP1 and SREBF2/SREBP2. Also regulates cholesterol synthesis by regulating degradation of HMGCR: initiates the sterol-mediated ubiquitin-mediated endoplasmic reticulum-associated degradation (ERAD) of HMGCR via recruitment of the reductase to the ubiquitin ligases AMFR/gp78 and/or RNF139. Also regulates degradation of SOAT2/ACAT2 when the lipid levels are low: initiates the ubiquitin-mediated degradation of SOAT2/ACAT2 via recruitment of the ubiquitin ligases AMFR/gp78. This Rattus norvegicus (Rat) protein is Insulin-induced gene 1 protein.